A 901-amino-acid polypeptide reads, in one-letter code: Protein translocase subunit SecA (901 aa).

ATP contacts are provided by residues glutamine 87, 105–109 (GEGKT), and aspartate 512. 4 residues coordinate Zn(2+): cysteine 885, cysteine 887, cysteine 896, and histidine 897.

Belongs to the SecA family. Monomer and homodimer. Part of the essential Sec protein translocation apparatus which comprises SecA, SecYEG and auxiliary proteins SecDF-YajC and YidC. Zn(2+) serves as cofactor.

The protein resides in the cell inner membrane. The protein localises to the cytoplasm. It carries out the reaction ATP + H2O + cellular proteinSide 1 = ADP + phosphate + cellular proteinSide 2.. In terms of biological role, part of the Sec protein translocase complex. Interacts with the SecYEG preprotein conducting channel. Has a central role in coupling the hydrolysis of ATP to the transfer of proteins into and across the cell membrane, serving both as a receptor for the preprotein-SecB complex and as an ATP-driven molecular motor driving the stepwise translocation of polypeptide chains across the membrane. This Salmonella arizonae (strain ATCC BAA-731 / CDC346-86 / RSK2980) protein is Protein translocase subunit SecA.